Consider the following 250-residue polypeptide: Doublesex- and mab-3-related transcription factor dmd-3 (250 aa).

A DNA-binding region (DM 1) is located at residues 19-68 (CQRCLNHGLREKRKNHKLSCTFRFCQCSNCIMVERRRQLNSRLMQIDGSR). The segment covering 90–100 (CTSQSETTNES) has biased composition (polar residues). The disordered stretch occupies residues 90–115 (CTSQSETTNESSGEDKDDGKPKERRP). The span at 102–115 (GEDKDDGKPKERRP) shows a compositional bias: basic and acidic residues. Positions 117–164 (CQRCAQHSVVNRLKGHKRACPFRDCFCAKCQVVVERQKLMADQIKLRR) form a DNA-binding region, DM 2. The interval 166 to 201 (QKREKNNLNSEREAPIAHSMTPSPIDTVTTTTTPTS) is disordered. The span at 169 to 180 (EKNNLNSEREAP) shows a compositional bias: basic and acidic residues. Positions 186 to 201 (TPSPIDTVTTTTTPTS) are enriched in low complexity.

Belongs to the DMRT family. In males, expressed in the tail tip. Specifically, expressed in 15 male-specific muscles of the tail tip called the diagonal muscles, and also in core body muscles of both males and hermaphrodites. In males, expressed in ray A-neurons. In males, expressed in PHC sensory neurons. In males, it is also expressed in the hindgut, B lineage and somatic gonad. In hermaphrodites, expressed in the anchor cell only.

The protein localises to the nucleus. It is found in the perikaryon. In terms of biological role, transcriptional activator which promotes male-specific development. Acts partially redundantly with the transcription factor mab-3 to coordinate tail tip cell fusion and retraction and thereby regulate male tail tip morphogenesis. This is most likely through the regulation of downstream effectors such as eff-1. May also negatively regulate the expression of other proteins implicated in male tail morphogenesis including nhr-25, vav-1 and arl-1 in tail tip cells. In males, plays a role in the development of ray A-neurons by negatively regulating the activity of the transcription factor ast-1. Plays a role in the male-specific differentiation of PHC sensory neurons into densely connected hub sensory neurons. Plays a role in male mating behavior. The chain is Doublesex- and mab-3-related transcription factor dmd-3 from Caenorhabditis elegans.